We begin with the raw amino-acid sequence, 187 residues long: MTQLKNPVLMATIGAAQGLRGEVRVKSFTDDPAALGDYGNLHSEDGRVFEVLEIREAKNVVVVRFRGINDRTAAEALNGLELFIERDNLPDDDLDEDEFFYADLEGLEAVDRTGKSYGSVTGVFDFGAGDLLELKGPGLRPVLIPFTEWSVLEIDLEAGKLVIDPTAAGLVDDEKSGPGKPFPTKRK.

Residues 96-169 form the PRC barrel domain; that stretch reads EDEFFYADLE…KLVIDPTAAG (74 aa).

Belongs to the RimM family. In terms of assembly, binds ribosomal protein uS19.

It localises to the cytoplasm. In terms of biological role, an accessory protein needed during the final step in the assembly of 30S ribosomal subunit, possibly for assembly of the head region. Essential for efficient processing of 16S rRNA. May be needed both before and after RbfA during the maturation of 16S rRNA. It has affinity for free ribosomal 30S subunits but not for 70S ribosomes. This chain is Ribosome maturation factor RimM, found in Rhizobium meliloti (strain 1021) (Ensifer meliloti).